Reading from the N-terminus, the 187-residue chain is Homeobox expressed in ES cells 1-B (187 aa).

Residues 110-169 (GRRPRTAFTRSQIEILENVFRVNSYPGIDVREELASKLALDEDRIQIWFQNRRAKLKRSH) constitute a DNA-binding region (homeobox).

It belongs to the ANF homeobox family. The N-terminus interacts with the LIM 2 domain of zyx. As to expression, first expressed at a low level in the late blastula stage (stage 9) in most cells of the animal half of the embryo. Following this, predominantly expressed in two zones; the dorsal blastopore lip (Spemann organizer) at the beginning of gastrulation, and subsequently in the anterior part of the neural anlage (the region of future forebrain).

The protein localises to the nucleus. Its function is as follows. Regulates the earliest stages of development of the anterior neural plate. Plays a role in forebrain development by inhibiting the expression of otx2 and pax6 in the rostral region of the anterior neural plate. Necessary for both neural differentiation and neural patterning. Controls Spemann organizer development. May act as a transcriptional repressor. In Xenopus laevis (African clawed frog), this protein is Homeobox expressed in ES cells 1-B (hesx1-b).